The following is a 733-amino-acid chain: Photosystem I P700 chlorophyll a apoprotein A2 (733 aa).

The next 8 membrane-spanning stretches (helical) occupy residues 46–69 (IFAS…FHVA), 135–158 (LYQG…LHLQ), 175–199 (LNHH…HVAI), 273–291 (IAHH…GHMY), 330–353 (LHFQ…QHMY), 369–395 (AALY…IFFV), 417–439 (ALIS…LYVH), and 516–534 (FLVH…LILV). The [4Fe-4S] cluster site is built by cysteine 558 and cysteine 567. Transmembrane regions (helical) follow at residues 574–595 (AFYL…YWHW) and 642–664 (LSVW…MFLI). The chlorophyll a site is built by histidine 653, methionine 661, and tyrosine 669. Tryptophan 670 is a binding site for phylloquinone. The chain crosses the membrane as a helical span at residues 706–726 (LVGLAHFTVGYVLTYAAFLIA).

It belongs to the PsaA/PsaB family. As to quaternary structure, the PsaA/B heterodimer binds the P700 chlorophyll special pair and subsequent electron acceptors. PSI consists of a core antenna complex that captures photons, and an electron transfer chain that converts photonic excitation into a charge separation. The cyanobacterial PSI reaction center is composed of one copy each of PsaA,B,C,D,E,F,I,J,K,L,M and X, and forms trimeric complexes. PSI electron transfer chain: 5 chlorophyll a, 1 chlorophyll a', 2 phylloquinones and 3 4Fe-4S clusters. PSI core antenna: 90 chlorophyll a, 22 carotenoids, 3 phospholipids and 1 galactolipid. P700 is a chlorophyll a/chlorophyll a' dimer, A0 is one or more chlorophyll a, A1 is one or both phylloquinones and FX is a shared 4Fe-4S iron-sulfur center. serves as cofactor.

The protein resides in the cellular thylakoid membrane. It carries out the reaction reduced [plastocyanin] + hnu + oxidized [2Fe-2S]-[ferredoxin] = oxidized [plastocyanin] + reduced [2Fe-2S]-[ferredoxin]. PsaA and PsaB bind P700, the primary electron donor of photosystem I (PSI), as well as the electron acceptors A0, A1 and FX. PSI is a plastocyanin/cytochrome c6-ferredoxin oxidoreductase, converting photonic excitation into a charge separation, which transfers an electron from the donor P700 chlorophyll pair to the spectroscopically characterized acceptors A0, A1, FX, FA and FB in turn. Oxidized P700 is reduced on the lumenal side of the thylakoid membrane by plastocyanin or cytochrome c6. In Picosynechococcus sp. (strain ATCC 27264 / PCC 7002 / PR-6) (Agmenellum quadruplicatum), this protein is Photosystem I P700 chlorophyll a apoprotein A2.